The sequence spans 162 residues: Disulfide bond formation protein B (162 aa).

Topologically, residues Met-1–Gly-10 are cytoplasmic. A helical membrane pass occupies residues Leu-11–Gly-27. Residues Leu-28–Gly-45 are Periplasmic-facing. Residues Cys-37 and Cys-40 are joined by a disulfide bond. The helical transmembrane segment at Val-46–Pro-62 threads the bilayer. Residues Arg-63–Trp-68 are Cytoplasmic-facing. A helical transmembrane segment spans residues Pro-69–Leu-86. Topologically, residues Arg-87 to Gly-140 are periplasmic. A disulfide bridge links Cys-100 with Cys-127. Residues Trp-141–Ala-159 traverse the membrane as a helical segment. Over Arg-160 to Ala-162 the chain is Cytoplasmic.

This sequence belongs to the DsbB family.

Its subcellular location is the cell inner membrane. Required for disulfide bond formation in some periplasmic proteins. Acts by oxidizing the DsbA protein. This Alkalilimnicola ehrlichii (strain ATCC BAA-1101 / DSM 17681 / MLHE-1) protein is Disulfide bond formation protein B.